The primary structure comprises 641 residues: MELKGVQPSNGSSNGSGNGATNAASTEKTDAEKPTAERTNWGNGLEFLMSCISVSVGLGNVWRFPFTAYENGGGAFLIPYIIVLFLIGKPMYYLEMIMGQFTSQGTVKIWSVVPGFVGVGYGQAFGTICIISYYSSLLALTLYYLFVSFQSELPWSYCRDEWTNCVNSRPQEYVDNLLTGVSLANESARNLSGIVANDETEKLQSSSELYFLNVVIKEKLDISDGVGDPDWKLTLALFVAWVVIFLVIMRGVKSSGKAAYFLALFPYVVLFVLLIRAVTLEGARDGILFFLEPQWGELLNPTVWKEAVVQCFFSLAVGSGPIIMFASYNRFDHGIYRDAMIVTTLDTLTSLLGGITIFAILGNLAHNLQIENIRDVVRSGTGLAFISYPDAISKFQAVPQLFSVLFFFMLFVLGIGSIVALQSTIVTIICDQFKGWKYWKVALTTSVCGFLMGLVYVTPGGQWILTLVDFYGGTYVVFILAIFELAGIVWVYGLQNFCDDIEFMCNRRVSLYWRVCWSFFTPVMMIIIFIYSMVTIEPIKYSELYFPEAANIAGWLLFAIGAAQFPLWGLWYISRHPQGTYWKSLKASLKPSDRWGPANPEIRREWVIFKNQKAAQRATQKDTSKLGFFWRKVANFCGSNK.

A disordered region spans residues 1 to 38; that stretch reads MELKGVQPSNGSSNGSGNGATNAASTEKTDAEKPTAER. Over 1–40 the chain is Cytoplasmic; it reads MELKGVQPSNGSSNGSGNGATNAASTEKTDAEKPTAERTN. Positions 9-26 are enriched in low complexity; sequence SNGSSNGSGNGATNAAST. Residues 27–36 are compositionally biased toward basic and acidic residues; that stretch reads EKTDAEKPTA. Helical transmembrane passes span 41–61, 74–94, and 111–131; these read WGNG…LGNV, GAFL…MYYL, and SVVP…ICII. 2 N-linked (GlcNAc...) asparagine glycosylation sites follow: Asn-185 and Asn-190. 9 helical membrane-spanning segments follow: residues 229 to 249, 258 to 278, 307 to 327, 341 to 361, 401 to 421, 447 to 467, 474 to 494, 516 to 536, and 552 to 572; these read PDWK…LVIM, AAYF…IRAV, AVVQ…MFAS, IVTT…FAIL, LFSV…IVAL, VCGF…ILTL, TYVV…VYGL, CWSF…MVTI, and IAGW…GLWY.

This sequence belongs to the sodium:neurotransmitter symporter (SNF) (TC 2.A.22) family. In larvae, weak specific expression in the anterior midgut just proximal to the gastric caeca reproductive rudiments, common ureters of the Malpighian tubules, and distal swollen portion of the anterior pair of Malpighian tubules. Expression is also seen in the imaginal disks of the head; brain hemispheres and the ventral ganglion. Stronger expression in the posterior midgut.

The protein localises to the membrane. Functionally, unusual broad substrate spectrum amino acid:sodium cotransporter that promotes absorption of the D isomers of essential amino acids. Neutral amino acids are the preferred substrates, especially methionine and phenylalanine. The polypeptide is Sodium-dependent nutrient amino acid transporter 1 (NAAT1) (Drosophila melanogaster (Fruit fly)).